Here is a 98-residue protein sequence, read N- to C-terminus: NADH-ubiquinone oxidoreductase chain 4L (98 aa).

3 helical membrane passes run 1 to 21 (MIPT…GMLT), 27 to 47 (VASL…TTLI), and 61 to 81 (IILL…LISI).

Belongs to the complex I subunit 4L family. As to quaternary structure, core subunit of respiratory chain NADH dehydrogenase (Complex I) which is composed of 45 different subunits.

It is found in the mitochondrion inner membrane. It carries out the reaction a ubiquinone + NADH + 5 H(+)(in) = a ubiquinol + NAD(+) + 4 H(+)(out). In terms of biological role, core subunit of the mitochondrial membrane respiratory chain NADH dehydrogenase (Complex I) which catalyzes electron transfer from NADH through the respiratory chain, using ubiquinone as an electron acceptor. Part of the enzyme membrane arm which is embedded in the lipid bilayer and involved in proton translocation. The polypeptide is NADH-ubiquinone oxidoreductase chain 4L (MT-ND4L) (Macaca nigra (Celebes black macaque)).